The sequence spans 258 residues: Deoxyribose-phosphate aldolase (258 aa).

The Proton donor/acceptor role is filled by D102. The Schiff-base intermediate with acetaldehyde role is filled by K165. K199 (proton donor/acceptor) is an active-site residue.

Belongs to the DeoC/FbaB aldolase family. DeoC type 2 subfamily.

It localises to the cytoplasm. The enzyme catalyses 2-deoxy-D-ribose 5-phosphate = D-glyceraldehyde 3-phosphate + acetaldehyde. It participates in carbohydrate degradation; 2-deoxy-D-ribose 1-phosphate degradation; D-glyceraldehyde 3-phosphate and acetaldehyde from 2-deoxy-alpha-D-ribose 1-phosphate: step 2/2. In terms of biological role, catalyzes a reversible aldol reaction between acetaldehyde and D-glyceraldehyde 3-phosphate to generate 2-deoxy-D-ribose 5-phosphate. The protein is Deoxyribose-phosphate aldolase of Aliivibrio fischeri (strain ATCC 700601 / ES114) (Vibrio fischeri).